We begin with the raw amino-acid sequence, 146 residues long: Aspartate carbamoyltransferase regulatory chain (146 aa).

Residues Cys-102, Cys-107, Cys-131, and Cys-134 each contribute to the Zn(2+) site.

The protein belongs to the PyrI family. Contains catalytic and regulatory chains. Requires Zn(2+) as cofactor.

Involved in allosteric regulation of aspartate carbamoyltransferase. The chain is Aspartate carbamoyltransferase regulatory chain from Clostridium acetobutylicum (strain ATCC 824 / DSM 792 / JCM 1419 / IAM 19013 / LMG 5710 / NBRC 13948 / NRRL B-527 / VKM B-1787 / 2291 / W).